The following is a 27-amino-acid chain: uncharacterized protein (27 aa).

The helical transmembrane segment at 3 to 23 (IILWAVLIIFLIGLLVVTGVF) threads the bilayer.

The protein resides in the cell inner membrane. This is an uncharacterized protein from Escherichia coli (strain K12).